Reading from the N-terminus, the 198-residue chain is MIEIPTDLPAELVPLSWLIGVWEGTGVLDYAIGDDHTEREFGQRIGFSHDGQNYLAYSSTAWLLDSDRTPLAAESGYWRLSRTLIEGDAGPGMLPGVGPRPFGTAQSVEALRASHGGFDIDVSIVHPNGVSELYIGRVNGPRIDLATDAVVRTAGAKEYTAATRLYGLVENHLLWAWDIAALGQELRTHASARLAKAE.

The short motif at Gly20–Gly26 is the GXWXGXG element. His189 provides a ligand contact to heme b.

It belongs to the nitrobindin family. Homodimer. It depends on heme b as a cofactor.

The catalysed reaction is peroxynitrite = nitrate. It participates in nitrogen metabolism. In terms of biological role, heme-binding protein able to scavenge peroxynitrite and to protect free L-tyrosine against peroxynitrite-mediated nitration, by acting as a peroxynitrite isomerase that converts peroxynitrite to nitrate. Therefore, this protein likely plays a role in peroxynitrite sensing and in the detoxification of reactive nitrogen and oxygen species (RNS and ROS, respectively). Is able to bind nitric oxide (NO) in vitro, but may act as a sensor of peroxynitrite levels in vivo. The polypeptide is Peroxynitrite isomerase (Leifsonia xyli subsp. xyli (strain CTCB07)).